A 423-amino-acid polypeptide reads, in one-letter code: Ferrochelatase, mitochondrial (423 aa).

The transit peptide at 1-40 (MIRFCPSCFALKRTAPVLNHTSRLGNYFNNTFSKFSVNRM) directs the protein to the mitochondrion. Cys-200 is a binding site for [2Fe-2S] cluster. Residue Asp-385 is part of the active site. [2Fe-2S] cluster is bound by residues Cys-405, Cys-408, and Cys-413.

It belongs to the ferrochelatase family. Monomer. It depends on [2Fe-2S] cluster as a cofactor.

It is found in the mitochondrion inner membrane. The protein localises to the cytoplasm. The protein resides in the nucleus. The catalysed reaction is heme b + 2 H(+) = protoporphyrin IX + Fe(2+). Its pathway is porphyrin-containing compound metabolism; protoheme biosynthesis; protoheme from protoporphyrin-IX: step 1/1. In terms of biological role, catalyzes the ferrous insertion into protoporphyrin IX. This is Ferrochelatase, mitochondrial (hem15) from Schizosaccharomyces pombe (strain 972 / ATCC 24843) (Fission yeast).